The chain runs to 264 residues: Thymidylate synthase (264 aa).

DUMP is bound at residue arginine 21. Histidine 51 contributes to the (6R)-5,10-methylene-5,6,7,8-tetrahydrofolate binding site. Arginine 126–arginine 127 is a binding site for dUMP. Cysteine 146 serves as the catalytic Nucleophile. DUMP-binding positions include arginine 166–aspartate 169, asparagine 177, and histidine 207–tyrosine 209. Aspartate 169 lines the (6R)-5,10-methylene-5,6,7,8-tetrahydrofolate pocket. (6R)-5,10-methylene-5,6,7,8-tetrahydrofolate is bound at residue alanine 263.

The protein belongs to the thymidylate synthase family. Bacterial-type ThyA subfamily. Homodimer.

It is found in the cytoplasm. The catalysed reaction is dUMP + (6R)-5,10-methylene-5,6,7,8-tetrahydrofolate = 7,8-dihydrofolate + dTMP. The protein operates within pyrimidine metabolism; dTTP biosynthesis. Functionally, catalyzes the reductive methylation of 2'-deoxyuridine-5'-monophosphate (dUMP) to 2'-deoxythymidine-5'-monophosphate (dTMP) while utilizing 5,10-methylenetetrahydrofolate (mTHF) as the methyl donor and reductant in the reaction, yielding dihydrofolate (DHF) as a by-product. This enzymatic reaction provides an intracellular de novo source of dTMP, an essential precursor for DNA biosynthesis. This is Thymidylate synthase from Shewanella baltica (strain OS185).